The primary structure comprises 56 residues: uncharacterized protein (56 aa).

2 consecutive transmembrane segments (helical) span residues Val-5 to Tyr-23 and Ile-33 to Trp-55.

The protein localises to the cell membrane. This is an uncharacterized protein from Archaeoglobus fulgidus (strain ATCC 49558 / DSM 4304 / JCM 9628 / NBRC 100126 / VC-16).